Here is a 150-residue protein sequence, read N- to C-terminus: UPF0098 protein CPn_0877/CP_0992/CPj0877/CpB0906 (150 aa).

This sequence belongs to the UPF0098 family.

This chain is UPF0098 protein CPn_0877/CP_0992/CPj0877/CpB0906, found in Chlamydia pneumoniae (Chlamydophila pneumoniae).